Here is a 202-residue protein sequence, read N- to C-terminus: MSGEWQPRTLLGRLVVEGKIKSIDEVFARNMPIREVEIIDTLLPGLKSEVLSVGFVQRQTDSGEVSQYQVTVAVGNEDGYVGVGMGKSRQIGIAIEKATRRAKLNIVPVRRGCGSWECLCGEPHSIPFKVEGKAGSVKIELIPAPKGVGLVASDVAKTVLRLAGIKDVWSRSYGETRTTHNMAKAVYEALKKTYQFYSPDQW.

One can recognise an S5 DRBM domain in the interval Leu-46 to Val-109.

This sequence belongs to the universal ribosomal protein uS5 family. Part of the 30S ribosomal subunit. Contacts protein S4.

Its function is as follows. With S4 and S12 plays an important role in translational accuracy. This is Small ribosomal subunit protein uS5 from Thermofilum pendens (strain DSM 2475 / Hrk 5).